The sequence spans 243 residues: Bidirectional sugar transporter SWEET2a (243 aa).

A signal peptide spans 1 to 15 (MMNALGLSVAATSTG). Topologically, residues 16 to 24 (SPFHDVCCY) are extracellular. A helical membrane pass occupies residues 25-45 (GAGIAGNIFALVLFISPLPTF). One can recognise a MtN3/slv 1 domain in the interval 27–112 (GIAGNIFALV…ATFIAFADAK (86 aa)). Over 46–56 (KRIVRNGSTEQ) the chain is Cytoplasmic. Residues 57–79 (FSAMPYIYSLLNCLICLWYGLPF) traverse the membrane as a helical segment. At 80–90 (VSYGVVLVATV) the chain is on the extracellular side. The chain crosses the membrane as a helical span at residues 91-111 (NSIGALFQLAYTATFIAFADA). At 112–118 (KNRVKVS) the chain is on the cytoplasmic side. Residues 119 to 139 (SLLVMVFGVFALIVYVSLALF) traverse the membrane as a helical segment. The Extracellular portion of the chain corresponds to 140–146 (DHQTRQL). Residues 147-167 (FVGYLSVASLIFMFASPLSII) form a helical membrane-spanning segment. The MtN3/slv 2 domain maps to 147–229 (FVGYLSVASL…QLVLYGYFRK (83 aa)). The Cytoplasmic segment spans residues 168–180 (NLVIRTKSVEYMP). Residues 181–201 (FYLSLSMFLMSVSFFAYGVLL) form a helical membrane-spanning segment. The Extracellular segment spans residues 202–203 (HD). A helical membrane pass occupies residues 204–224 (FFIYIPNGIGTVLGVIQLVLY). Residues 225 to 243 (GYFRKGSREDSLPLLVTHT) are Cytoplasmic-facing.

This sequence belongs to the SWEET sugar transporter family. In terms of assembly, forms homooligomers and/or heterooligomers.

The protein localises to the cell membrane. Functionally, mediates both low-affinity uptake and efflux of sugar across the plasma membrane. In Oryza sativa subsp. indica (Rice), this protein is Bidirectional sugar transporter SWEET2a (SWEET2A).